We begin with the raw amino-acid sequence, 346 residues long: uncharacterized protein (346 aa).

This is an uncharacterized protein from Acanthamoeba polyphaga (Amoeba).